The following is a 504-amino-acid chain: Apoptosis inhibitor 5 (504 aa).

The ARM-like and Heat-like helical repeats stretch occupies residues 1 to 360; that stretch reads MPTVEELYRN…HQLGRKLPDF (360 aa). An N6-acetyllysine modification is found at Lys-251. The tract at residues 370–391 is leucine-zipper; the sequence is LKDFKIRLQYFARGLQVYIRQL. Residue Thr-399 is modified to Phosphothreonine. Residues 452–504 are disordered; sequence GQKRASEDTTSGSPPKKSSAGPKRDARQIYNPPSGKYSSNLGNFNYERSLQGK. The Nuclear localization signal motif lies at 454–475; the sequence is KRASEDTTSGSPPKKSSAGPKR. Phosphoserine is present on residues Ser-462, Ser-464, and Ser-469. Low complexity predominate over residues 462–472; the sequence is SGSPPKKSSAG. Polar residues predominate over residues 487 to 504; the sequence is KYSSNLGNFNYERSLQGK.

Belongs to the API5 family. As to quaternary structure, monomer. Interacts with FGF2 and ACIN1. Post-translationally, acetylation at Lys-251 impairs antiapoptotic function.

The protein localises to the nucleus. The protein resides in the cytoplasm. Its function is as follows. Antiapoptotic factor that may have a role in protein assembly. Negatively regulates ACIN1. By binding to ACIN1, it suppresses ACIN1 cleavage from CASP3 and ACIN1-mediated DNA fragmentation. Also known to efficiently suppress E2F1-induced apoptosis. In Pongo abelii (Sumatran orangutan), this protein is Apoptosis inhibitor 5 (API5).